Consider the following 496-residue polypeptide: Bifunctional protein HldE (496 aa).

Residues 1-331 (MDPTPALAEI…AAVHQEEVSA (331 aa)) are ribokinase. Position 206-209 (206-209 (NRKE)) interacts with ATP. Asp-276 is an active-site residue. Positions 358–496 (FTNGCFDLLH…GGSRRSGDTL (139 aa)) are cytidylyltransferase.

This sequence in the N-terminal section; belongs to the carbohydrate kinase PfkB family. It in the C-terminal section; belongs to the cytidylyltransferase family. Homodimer.

It carries out the reaction D-glycero-beta-D-manno-heptose 7-phosphate + ATP = D-glycero-beta-D-manno-heptose 1,7-bisphosphate + ADP + H(+). It catalyses the reaction D-glycero-beta-D-manno-heptose 1-phosphate + ATP + H(+) = ADP-D-glycero-beta-D-manno-heptose + diphosphate. Its pathway is nucleotide-sugar biosynthesis; ADP-L-glycero-beta-D-manno-heptose biosynthesis; ADP-L-glycero-beta-D-manno-heptose from D-glycero-beta-D-manno-heptose 7-phosphate: step 1/4. It participates in nucleotide-sugar biosynthesis; ADP-L-glycero-beta-D-manno-heptose biosynthesis; ADP-L-glycero-beta-D-manno-heptose from D-glycero-beta-D-manno-heptose 7-phosphate: step 3/4. Its function is as follows. Catalyzes the phosphorylation of D-glycero-D-manno-heptose 7-phosphate at the C-1 position to selectively form D-glycero-beta-D-manno-heptose-1,7-bisphosphate. In terms of biological role, catalyzes the ADP transfer from ATP to D-glycero-beta-D-manno-heptose 1-phosphate, yielding ADP-D-glycero-beta-D-manno-heptose. This chain is Bifunctional protein HldE, found in Rhodospirillum rubrum (strain ATCC 11170 / ATH 1.1.1 / DSM 467 / LMG 4362 / NCIMB 8255 / S1).